Here is a 568-residue protein sequence, read N- to C-terminus: MDQDAFILKEDSEVEREAPGGRESLSDVIGFLDAVLSSEPTDIGGDRSWLHNTINTPQGPGSAHRAKSEGEGEVSTPSTQDNRSGEESRVSGRTSKPEAEAHAGNLDKQNIHRAFGGRTGTNSVSQDLGDGGDSGILENPPNERGYPRSGIEDENREMAAHPDKRGEDQAEGLPEEVRGGTSLPDEGEGGASNNGRSMEPGSSHSARVTGVLVIPSPELEEAVLRRNKRRPTNSGSKPLTPATVPGTRSPPLNRYNSTGSPPGKPPSTQDEHINSGDTPAVRVKDRKPPIGTRSVSDCPANGRPIHPGLETDSTKKGIGENTSSMKEMATLLTSLGVIQSAQEFESSRDASYVFARRALKSANYAEMTFNVCGLILSAEKSSARKVDENKQLLKQIQESVESFRDIYKRFSEYQKEQNSLLMSNLSTLHIITDRGGKTDNTDSLTRSPSVFAKSKENKTKATRFDPSMETLEDMKYKPDLIREDEFRDEIRNPLYQERDTEPRASNASRLLPSKEKPTMHSLRLVIESSPLSRAEKAAYVKSLSKCKTDQEVKAVMELVEEDIESLTN.

2 disordered regions span residues 1 to 23 and 38 to 320; these read MDQD…GGRE and SEPT…GIGE. Residues 7-20 are compositionally biased toward basic and acidic residues; sequence ILKEDSEVEREAPG. The interval 33–41 is N0 binding; it reads DAVLSSEPT. The span at 50-59 shows a compositional bias: polar residues; it reads LHNTINTPQG. Residue Ser68 is modified to Phosphoserine; by host. Basic and acidic residues predominate over residues 83-101; the sequence is RSGEESRVSGRTSKPEAEA. Ser125 is modified (phosphoserine; by host). Over residues 150-168 the composition is skewed to basic and acidic residues; sequence GIEDENREMAAHPDKRGED. Residues 191 to 206 are compositionally biased toward polar residues; that stretch reads ASNNGRSMEPGSSHSA. Phosphoserine; by host occurs at positions 192, 249, 257, and 260. Multimerization regions lie at residues 344–411 and 362–432; these read FESS…KRFS and ANYA…HIIT. Residues 345-412 form a bipartite nucleocapsid binding domain 1 region; sequence ESSRDASYVF…FRDIYKRFSE (68 aa). Positions 364–429 form a coiled coil; it reads YAEMTFNVCG…LLMSNLSTLH (66 aa). 2 l protein binding regions span residues 412–445 and 413–445; these read EYQK…DSLT and YQKE…DSLT. Residues Ser447 and Ser449 each carry the phosphoserine; by host modification. Positions 479 to 568 are bipartite nucleocapsid binding domain 2; that stretch reads DLIREDEFRD…VEEDIESLTN (90 aa). The segment at 479-568 is interaction with the nucleocapsid (N-RNA); it reads DLIREDEFRD…VEEDIESLTN (90 aa). Residues 495-516 form a disordered region; sequence YQERDTEPRASNASRLLPSKEK. The segment at 547 to 566 is formation of N-RNA complex involved in transcription and replication; that stretch reads KTDQEVKAVMELVEEDIESL.

It belongs to the respirovirus P protein family. In terms of assembly, homotetramer. Interacts (via multimerization domain) with polymerase L; this interaction forms the polymerase complex. Interacts (via N-terminus) with N0; this interaction allows P to chaperon N0 before encapsidation and form the N-P complex. Interacts (via C-terminus) with N-RNA template; this interaction positions the polymerase on the template. Phosphorylated by PKC/PRKCZ, and other unknown kinases. Phosphorylation is necessary for viral transcription and replication. The N-terminus contains the majority of phosphorylated sites. Ser-249 is the major site of phosphorylation, but is not necessary for most functions.

It is found in the host cytoplasm. Functionally, essential cofactor of the RNA polymerase L that plays a central role in the transcription and replication by forming the polymerase complex with RNA polymerase L and recruiting L to the genomic N-RNA template for RNA synthesis. Also plays a central role in the encapsidation of nascent RNA chains by forming the encapsidation complex with the nucleocapsid protein N (N-P complex). Acts as a chaperone for newly synthesized free N protein, so-called N0, allowing encapsidation of nascent RNA chains during replication. The nucleoprotein protein N prevents excessive phosphorylation of P, which leads to down-regulation of viral transcription/ replication. Participates, together with N, in the formation of viral factories (viroplasms), which are large inclusions in the host cytoplasm where replication takes place. Recruits host PI4KB and remodel the host endoplasmic reticulum membrane to form viral replication factories. The sequence is that of Phosphoprotein (P/V/C) from Sendai virus (strain Fushimi) (SeV).